Reading from the N-terminus, the 304-residue chain is Nucleotide-binding protein SH2124 (304 aa).

19-26 contributes to the ATP binding site; sequence GLSGAGKS. GTP is bound at residue 70 to 73; the sequence is DLRG.

This sequence belongs to the RapZ-like family.

Displays ATPase and GTPase activities. The protein is Nucleotide-binding protein SH2124 of Staphylococcus haemolyticus (strain JCSC1435).